The sequence spans 355 residues: MKKNKRLMVMAGGTGGHVFPGLAVAKQLQEQGWEIRWLGTADRMEADLVPKHGIEIDFIKVKGLRGQGVKRLLAAPFQIINAIMQARAHMKRWQPDAVLGMGGYVSGPGGIAAWMSGIPVVLHEQNAVAGLTNQWLSKIAKKVFQAFPGAFPNAEVVGNPVREDVTQLAAPTERMQERQGPIRILVMGGSQGARILNQTLPEVMAKLGDDYSIRHQAGKGSAEEVNAAYQANGVANADVTEFIHDVAEAYAWADLLVCRSGALTVSEVSAAGVGAIFVPFMHKDRQQALNADHLVDCGAAKMIEQPDLTVESLTQQIQQLDRQALLTMAEQARGAAKLNADRVVAQAIVALTEKR.

Residues 14–16 (TGG), N126, R162, S190, I243, 262–267 (ALTVSE), and Q287 each bind UDP-N-acetyl-alpha-D-glucosamine.

Belongs to the glycosyltransferase 28 family. MurG subfamily.

The protein localises to the cell inner membrane. The catalysed reaction is di-trans,octa-cis-undecaprenyl diphospho-N-acetyl-alpha-D-muramoyl-L-alanyl-D-glutamyl-meso-2,6-diaminopimeloyl-D-alanyl-D-alanine + UDP-N-acetyl-alpha-D-glucosamine = di-trans,octa-cis-undecaprenyl diphospho-[N-acetyl-alpha-D-glucosaminyl-(1-&gt;4)]-N-acetyl-alpha-D-muramoyl-L-alanyl-D-glutamyl-meso-2,6-diaminopimeloyl-D-alanyl-D-alanine + UDP + H(+). Its pathway is cell wall biogenesis; peptidoglycan biosynthesis. Cell wall formation. Catalyzes the transfer of a GlcNAc subunit on undecaprenyl-pyrophosphoryl-MurNAc-pentapeptide (lipid intermediate I) to form undecaprenyl-pyrophosphoryl-MurNAc-(pentapeptide)GlcNAc (lipid intermediate II). This Vibrio campbellii (strain ATCC BAA-1116) protein is UDP-N-acetylglucosamine--N-acetylmuramyl-(pentapeptide) pyrophosphoryl-undecaprenol N-acetylglucosamine transferase.